The chain runs to 239 residues: tRNA1(Val) (adenine(37)-N6)-methyltransferase (239 aa).

It belongs to the methyltransferase superfamily. tRNA (adenine-N(6)-)-methyltransferase family.

It localises to the cytoplasm. The catalysed reaction is adenosine(37) in tRNA1(Val) + S-adenosyl-L-methionine = N(6)-methyladenosine(37) in tRNA1(Val) + S-adenosyl-L-homocysteine + H(+). Specifically methylates the adenine in position 37 of tRNA(1)(Val) (anticodon cmo5UAC). This chain is tRNA1(Val) (adenine(37)-N6)-methyltransferase, found in Vibrio vulnificus (strain YJ016).